A 393-amino-acid polypeptide reads, in one-letter code: Flavohemoprotein (393 aa).

Positions 1–139 constitute a Globin domain; that stretch reads MLSAEHRAIV…LADLLIGLEE (139 aa). Histidine 85 serves as a coordination point for heme b. Active-site charge relay system residues include tyrosine 95 and glutamate 138. A reductase region spans residues 150 to 393; it reads GGWRGTRAFV…EFFGPASALD (244 aa). One can recognise an FAD-binding FR-type domain in the interval 153–256; the sequence is RGTRAFVVAR…LTPSGDFTLE (104 aa). FAD-binding positions include tyrosine 191 and 205–208; that span reads RNYS. Residue 268–273 participates in NADP(+) binding; it reads GVGITP. 385–388 is a binding site for FAD; that stretch reads FFGP.

Belongs to the globin family. Two-domain flavohemoproteins subfamily. The protein in the C-terminal section; belongs to the flavoprotein pyridine nucleotide cytochrome reductase family. Heme b serves as cofactor. The cofactor is FAD.

It catalyses the reaction 2 nitric oxide + NADPH + 2 O2 = 2 nitrate + NADP(+) + H(+). The catalysed reaction is 2 nitric oxide + NADH + 2 O2 = 2 nitrate + NAD(+) + H(+). Its function is as follows. Is involved in NO detoxification in an aerobic process, termed nitric oxide dioxygenase (NOD) reaction that utilizes O(2) and NAD(P)H to convert NO to nitrate, which protects the bacterium from various noxious nitrogen compounds. Therefore, plays a central role in the inducible response to nitrosative stress. The protein is Flavohemoprotein of Burkholderia sp. (strain TH2).